Consider the following 760-residue polypeptide: Histone-lysine N-methyltransferase EZH2 (760 aa).

Disordered stretches follow at residues 208–231 (KDDA…SKKF) and 356–444 (PERA…PENV). Residues 361 to 373 (TPSKRSTGRRRGR) show a composition bias toward basic residues. The span at 375–388 (PNSNSRPSTPTVNS) shows a compositional bias: polar residues. Basic and acidic residues predominate over residues 389 to 400 (ETKDTDSDREGG). One can recognise a CXC domain in the interval 517–619 (CRKIQLKKDG…SKNVSCKNCS (103 aa)). The SET domain occupies 626-741 (KHLLLAPSDV…TGEELFFDYR (116 aa)).

This sequence belongs to the class V-like SAM-binding methyltransferase superfamily. Histone-lysine methyltransferase family. EZ subfamily. Component of the prc2/eed-ezh2 complex.

It localises to the nucleus. It carries out the reaction L-lysyl(27)-[histone H3] + 3 S-adenosyl-L-methionine = N(6),N(6),N(6)-trimethyl-L-lysyl(27)-[histone H3] + 3 S-adenosyl-L-homocysteine + 3 H(+). Polycomb group (PcG) protein. Catalytic subunit of the prc2/eed-ezh2 complex, which methylates 'Lys-9' and 'Lys-27' of histone H3, leading to transcriptional repression of the affected target gene. May regulate the circadian clock via histone methylation at the promoter of the circadian genes. The chain is Histone-lysine N-methyltransferase EZH2 (ezh2) from Danio rerio (Zebrafish).